The chain runs to 314 residues: MAQINCTQVTEFILVGLTDREELKMPLFVVFLSIYLFTTLGNLGLILVIRTDARLHTPMYFFLSNLAFVDFCYSSVITPKMLGNFLYKQNMISFNACAAQLGCFLAFMTAECLLLASMAYDRYVAICNPLLYMVLMSPGICFQLVAAPYSYSFLVALFHAILTFRLCYCHSNAINHFYCDDMPLLRLTCSDTHSKQLWIFVCAGIMFISSLLIVFISYTFIISAILRMRSAEGRRKAFSTCGSHMLAVTIFYGTLIFMYLQPSSNHSLDTDKMASVFYTVIIPMLNPLIYSLRNKEVKDALKKLIASKNQMLSS.

At 1-25 (MAQINCTQVTEFILVGLTDREELKM) the chain is on the extracellular side. An N-linked (GlcNAc...) asparagine glycan is attached at Asn-5. Residues 26–46 (PLFVVFLSIYLFTTLGNLGLI) traverse the membrane as a helical segment. The Cytoplasmic portion of the chain corresponds to 47–54 (LVIRTDAR). A helical membrane pass occupies residues 55–75 (LHTPMYFFLSNLAFVDFCYSS). Residues 76–99 (VITPKMLGNFLYKQNMISFNACAA) lie on the Extracellular side of the membrane. Residues Cys-97 and Cys-189 are joined by a disulfide bond. Residues 100-120 (QLGCFLAFMTAECLLLASMAY) form a helical membrane-spanning segment. The Cytoplasmic portion of the chain corresponds to 121–133 (DRYVAICNPLLYM). A helical transmembrane segment spans residues 134–154 (VLMSPGICFQLVAAPYSYSFL). Residues 155 to 196 (VALFHAILTFRLCYCHSNAINHFYCDDMPLLRLTCSDTHSKQ) are Extracellular-facing. Residues 197 to 217 (LWIFVCAGIMFISSLLIVFIS) traverse the membrane as a helical segment. Residues 218–237 (YTFIISAILRMRSAEGRRKA) are Cytoplasmic-facing. A helical membrane pass occupies residues 238-258 (FSTCGSHMLAVTIFYGTLIFM). At 259–271 (YLQPSSNHSLDTD) the chain is on the extracellular side. N-linked (GlcNAc...) asparagine glycosylation is present at Asn-265. A helical transmembrane segment spans residues 272–292 (KMASVFYTVIIPMLNPLIYSL). Residues 293 to 314 (RNKEVKDALKKLIASKNQMLSS) lie on the Cytoplasmic side of the membrane.

This sequence belongs to the G-protein coupled receptor 1 family.

The protein resides in the cell membrane. Functionally, potential odorant receptor. This is Olfactory receptor 8U9 from Mus musculus (Mouse).